We begin with the raw amino-acid sequence, 273 residues long: Glutamate racemase (273 aa).

Substrate contacts are provided by residues 9 to 10 (DS) and 41 to 42 (YG). The active-site Proton donor/acceptor is the C73. Substrate is bound at residue 74 to 75 (NT). The active-site Proton donor/acceptor is C183. A substrate-binding site is contributed by 184–185 (TH).

This sequence belongs to the aspartate/glutamate racemases family.

The catalysed reaction is L-glutamate = D-glutamate. Its pathway is cell wall biogenesis; peptidoglycan biosynthesis. Functionally, provides the (R)-glutamate required for cell wall biosynthesis. The protein is Glutamate racemase of Shewanella oneidensis (strain ATCC 700550 / JCM 31522 / CIP 106686 / LMG 19005 / NCIMB 14063 / MR-1).